The primary structure comprises 366 residues: Growth hormone secretagogue receptor type 1 (366 aa).

Topologically, residues 1–40 (MWNATLSEEPGYNLTLPDLGWDAPADNDSLTDELLPLFPA) are extracellular. Residues asparagine 3, asparagine 13, and asparagine 27 are each glycosylated (N-linked (GlcNAc...) asparagine). Residues 41–66 (PLLAGVTATCVALFVVGIAGNLLTML) form a helical membrane-spanning segment. Residues 67–72 (VVSRFR) are Cytoplasmic-facing. The chain crosses the membrane as a helical span at residues 73–96 (ELRTTTNLYLSSMAFSDLLIFLCM). Over 97–117 (PLDLVRLWQYRPWNFGDLLCK) the chain is Extracellular. Cysteine 116 and cysteine 198 are joined by a disulfide. A helical transmembrane segment spans residues 118 to 139 (LFQFVSESCTYATVLTITALSV). Over 140–162 (ERYFAICFPLRAKVVVTKGRVKL) the chain is Cytoplasmic. The helical transmembrane segment at 163–183 (VILVIWAVAFCSAGPIFVLVG) threads the bilayer. The Extracellular segment spans residues 184 to 211 (VEHENGTDPRDTNECRATEFAVRSGLLT). N-linked (GlcNAc...) asparagine glycosylation is present at asparagine 188. Residues 212 to 235 (VMVWVSSVFFFLPVFCLTVLYSLI) form a helical membrane-spanning segment. Residues 236–263 (GRKLWRRKRGEAAVGASLRDQNHKQTVK) lie on the Cytoplasmic side of the membrane. Residues 264-285 (MLAVVVFAFILCWLPFHVGRYL) form a helical membrane-spanning segment. At 286–302 (FSKSFEPGSLEIAQISQ) the chain is on the extracellular side. The helical transmembrane segment at 303 to 326 (YCNLVSFVLFYLSAAINPILYNIM) threads the bilayer. Over 327-366 (SKKYRVAVFKLLGFEPFSQRKLSTLKDESSRAWTETSINT) the chain is Cytoplasmic.

It belongs to the G-protein coupled receptor 1 family.

The protein resides in the cell membrane. In terms of biological role, receptor for ghrelin, coupled to G-alpha-11 proteins. Stimulates growth hormone secretion. Also binds other growth hormone releasing peptides (GHRP) (e.g. Met-enkephalin and GHRP-6) as well as non-peptide, low molecular weight secretagogues (e.g. L-692,429, MK-0677, adenosine). This Mustela putorius furo (European domestic ferret) protein is Growth hormone secretagogue receptor type 1 (GHSR).